Consider the following 237-residue polypeptide: Demethylmenaquinone methyltransferase (237 aa).

Residues Thr-58, Asp-79, and 106–107 (NA) each bind S-adenosyl-L-methionine.

Belongs to the class I-like SAM-binding methyltransferase superfamily. MenG/UbiE family.

It catalyses the reaction a 2-demethylmenaquinol + S-adenosyl-L-methionine = a menaquinol + S-adenosyl-L-homocysteine + H(+). It functions in the pathway quinol/quinone metabolism; menaquinone biosynthesis; menaquinol from 1,4-dihydroxy-2-naphthoate: step 2/2. Functionally, methyltransferase required for the conversion of demethylmenaquinol (DMKH2) to menaquinol (MKH2). The polypeptide is Demethylmenaquinone methyltransferase (Anoxybacillus flavithermus (strain DSM 21510 / WK1)).